A 532-amino-acid chain; its full sequence is Phosphoenolpyruvate carboxykinase (ATP) (532 aa).

Substrate-binding residues include R60, Y194, and K200. ATP contacts are provided by residues K200, H219, and 237-245 (GLSGTGKTT). The Mn(2+) site is built by K200 and H219. D258 is a binding site for Mn(2+). ATP-binding residues include E286, R324, and T449. A substrate-binding site is contributed by R324.

It belongs to the phosphoenolpyruvate carboxykinase (ATP) family. Mn(2+) is required as a cofactor.

The protein localises to the cytoplasm. The catalysed reaction is oxaloacetate + ATP = phosphoenolpyruvate + ADP + CO2. It functions in the pathway carbohydrate biosynthesis; gluconeogenesis. Functionally, involved in the gluconeogenesis. Catalyzes the conversion of oxaloacetate (OAA) to phosphoenolpyruvate (PEP) through direct phosphoryl transfer between the nucleoside triphosphate and OAA. The protein is Phosphoenolpyruvate carboxykinase (ATP) of Paracoccus denitrificans (strain Pd 1222).